A 358-amino-acid polypeptide reads, in one-letter code: RNA demethylase ALKBH5 (358 aa).

The disordered stretch occupies residues 1 to 50; it reads MSATYTDLREKLQSLYRDSPKEVRKRKQPTSDTEEEEAASEPEEEEEARK. Residues 7 to 22 are compositionally biased toward basic and acidic residues; sequence DLREKLQSLYRDSPKE. Residues 32–46 are compositionally biased toward acidic residues; it reads DTEEEEAASEPEEEE. The active site involves tyrosine 105. 2-oxoglutarate is bound by residues asparagine 159, tyrosine 161, histidine 170, histidine 232, and arginine 243. Cysteine 196 and cysteine 233 form a disulfide bridge. 2 disordered regions span residues 259-312 and 334-358; these read EMKS…RRSV and DYVD…MRRH. Polar residues predominate over residues 262–278; sequence SLSSSYQPERLQGSNRQ. Over residues 279–288 the composition is skewed to basic residues; the sequence is HILKPKRSHR. Residues 289–310 are compositionally biased toward basic and acidic residues; the sequence is KADPDAAHRPRILEMDKEENRR.

Belongs to the alkB family. Monomer. Requires Fe(2+) as cofactor.

It localises to the nucleus speckle. The catalysed reaction is an N(6)-methyladenosine in mRNA + 2-oxoglutarate + O2 = an adenosine in mRNA + formaldehyde + succinate + CO2. In terms of biological role, dioxygenase that specifically demethylates N(6)-methyladenosine (m6A) RNA, the most prevalent internal modification of messenger RNA (mRNA) in higher eukaryotes. Demethylates RNA by oxidative demethylation, which requires molecular oxygen, alpha-ketoglutarate and iron. Demethylation of m6A mRNA affects mRNA processing, translation and export. The sequence is that of RNA demethylase ALKBH5 (alkbh5) from Xenopus tropicalis (Western clawed frog).